Consider the following 740-residue polypeptide: Anaphase-promoting complex subunit 5 (740 aa).

Serine 180 is modified (phosphoserine). 13 TPR repeats span residues 194–234, 235–285, 286–322, 323–363, 364–403, 404–451, 452–485, 486–525, 526–565, 566–605, 606–645, 646–681, and 682–721; these read QKQA…FNPD, FAEA…GRSL, RYAALNLAALHCRFGHYQQAELALQEAIRIAQESNDH, VCLQ…YLAS, LGIQSLVQQRAFAGKTANKLMDALKDSDLLHWKHSLSELI, DISI…TESF, AVALCHLAELHAEQGCFAAAGEVLKHLKDRFPPN, SQHAQLWMLCDQKIQFDRAMNDGKFHLADSLVTGITALNG, IEGVYRKAVVLQAQNQMTEAHKLLQKLLTYCQKLKNTEMV, ISVLLSVAELYWRSSSPTIAMPVLLEALALSKEYRLQYLA, SETVLNLAYAQLILGIPEQALTLLHMAIEPILADGAVLDK, GRAMFLVSKCQVASAASYDPVKKAEALEAAIQNLSE, and AKNYFAQVDCRERIRDVAYFQARLYHALGKTQERNHCAMI. Threonine 217 carries the phosphothreonine modification.

Belongs to the APC5 family. As to quaternary structure, the mammalian APC/C is composed at least of 14 distinct subunits ANAPC1, ANAPC2, CDC27/APC3, ANAPC4, ANAPC5, CDC16/APC6, ANAPC7, CDC23/APC8, ANAPC10, ANAPC11, CDC26/APC12, ANAPC13, ANAPC15 and ANAPC16 that assemble into a complex of at least 19 chains with a combined molecular mass of around 1.2 MDa; APC/C interacts with FZR1 and FBXO5.

It is found in the nucleus. The protein localises to the cytoplasm. The protein resides in the cytoskeleton. Its subcellular location is the spindle. Its pathway is protein modification; protein ubiquitination. In terms of biological role, component of the anaphase promoting complex/cyclosome (APC/C), a cell cycle-regulated E3 ubiquitin ligase that controls progression through mitosis and the G1 phase of the cell cycle. The APC/C complex acts by mediating ubiquitination and subsequent degradation of target proteins: it mainly mediates the formation of 'Lys-11'-linked polyubiquitin chains and, to a lower extent, the formation of 'Lys-48'- and 'Lys-63'-linked polyubiquitin chains. The APC/C complex catalyzes assembly of branched 'Lys-11'-/'Lys-48'-linked branched ubiquitin chains on target proteins. In Mus musculus (Mouse), this protein is Anaphase-promoting complex subunit 5 (Anapc5).